A 205-amino-acid polypeptide reads, in one-letter code: Meiotic nuclear division protein 1 homolog (205 aa).

Position 2 is an N-acetylserine (Ser2). Residues 83–173 adopt a coiled-coil conformation; the sequence is KRKLEVLDSQ…EAANRWTDNI (91 aa).

It belongs to the MND1 family. In terms of assembly, heterodimer with PSMC3IP/HOP2. MND1-PSMC3IP interacts with DMC1 and RAD51 and binds preferentially to dsDNA.

The protein resides in the nucleus. Required for proper homologous chromosome pairing and efficient cross-over and intragenic recombination during meiosis. Stimulates both DMC1- and RAD51-mediated homologous strand assimilation, which is required for the resolution of meiotic double-strand breaks. In Bos taurus (Bovine), this protein is Meiotic nuclear division protein 1 homolog.